A 295-amino-acid chain; its full sequence is Putative 23S rRNA (guanine-N(1)-)-methyltransferase (295 aa).

Residues cysteine 11, cysteine 14, cysteine 31, and histidine 35 each contribute to the Zn(2+) site. S-adenosyl-L-methionine is bound by residues tyrosine 74, 116-117, and histidine 204; that span reads TG.

Belongs to the methyltransferase superfamily. RlmA family.

Confers strong resistance to mycinamicin (MM) and tylosin (TY). May function as methyltransferase. In Micromonospora griseorubida, this protein is Putative 23S rRNA (guanine-N(1)-)-methyltransferase (myrA).